The chain runs to 479 residues: GTPase Obg (479 aa).

The Obg domain occupies 2 to 159; that stretch reads TTFVDRVELH…QDIVLELKTV (158 aa). Residues 61 to 87 form a disordered region; the sequence is HHKPHRSATNGKPGEGGNRSGKDGQDL. Residues 160 to 331 form the OBG-type G domain; it reads ADVALVGYPS…LSFALAELVG (172 aa). GTP-binding positions include 166–173, 191–195, 212–215, 283–286, and 312–314; these read GYPSAGKS, FTTLV, DVPG, NKID, and SAV. Mg(2+)-binding residues include serine 173 and threonine 193. The OCT domain maps to 349 to 431; the sequence is PKAVDDAGFT…DNAVVFDWEP (83 aa). A compositionally biased stretch (basic and acidic residues) spans 440 to 453; the sequence is LGRRGEDHRLDEPR. The interval 440 to 479 is disordered; that stretch reads LGRRGEDHRLDEPRPAAQRRRDKQAERDDAEKEYDDFEPF. Positions 470–479 are enriched in acidic residues; the sequence is EKEYDDFEPF.

It belongs to the TRAFAC class OBG-HflX-like GTPase superfamily. OBG GTPase family. As to quaternary structure, monomer. Mg(2+) is required as a cofactor.

The protein resides in the cytoplasm. Its function is as follows. An essential GTPase which binds GTP, GDP and possibly (p)ppGpp with moderate affinity, with high nucleotide exchange rates and a fairly low GTP hydrolysis rate. Plays a role in control of the cell cycle, stress response, ribosome biogenesis and in those bacteria that undergo differentiation, in morphogenesis control. The chain is GTPase Obg from Streptomyces avermitilis (strain ATCC 31267 / DSM 46492 / JCM 5070 / NBRC 14893 / NCIMB 12804 / NRRL 8165 / MA-4680).